Reading from the N-terminus, the 189-residue chain is WASH complex subunit homolog 3 (189 aa).

Residues 35–74 (MTEMLNNFGNKMEDILEKAEQSLDTADRKLRLMESKLAGM) adopt a coiled-coil conformation. 2 disordered regions span residues 76-101 (LEDKSTTATPSSAPEIDEIHESNPSS) and 150-189 (SEGVDPSILKRGDEPSRPQAQTSRNYESSGESTASFSDSD). Over residues 150-165 (SEGVDPSILKRGDEPS) the composition is skewed to basic and acidic residues. Residues 167-189 (PQAQTSRNYESSGESTASFSDSD) are compositionally biased toward polar residues. Thr-182 carries the phosphothreonine modification.

The protein belongs to the CCDC53 family. In terms of assembly, probable component of the WASH complex. Component of the DHIC (ddl-1-containing hsf-1 inhibitory complex), which contains at least ddl-1, ddl-2, hsb-1 and hsf-1. Within the complex, interacts with ddl-2. Within the complex, interacts with hsb-1. Within the complex, interacts with hsf-1. Formation of the DHIC may be dependent upon the Insulin/IGF-1-like signaling (IIS) mediated pathway. Phosphorylated. Phosphorylation on Thr-182 may promote DHIC complex dissociation and consequently the activation of heat-shock transcription factor hsf-1. Phosphorylation is modulated by the Insulin/IGF-1-like signaling (IIS) mediated pathway. As to expression, expressed in pharynx, intestine, body wall muscles, vulva muscles, spermatheca, and several head and tail neurons.

In terms of biological role, acts as a component of the WASH core complex that functions as a nucleation-promoting factor (NPF) at the surface of endosomes, where it recruits and activates the Arp2/3 complex to induce actin polymerization, playing a key role in the fission of tubules that serve as transport intermediates during endosome sorting. Acts as a component of the DHIC (ddl-1-containing hsf-1 inhibitory complex) which modulates lifespan by sequestering the heat-shock transcription factor hsf-1 to negatively regulate its binding to DNA and its transcriptional activity. The chain is WASH complex subunit homolog 3 (ddl-1) from Caenorhabditis elegans.